Here is a 72-residue protein sequence, read N- to C-terminus: Rubredoxin (72 aa).

The 54-residue stretch at 19 to 72 folds into the Rubredoxin-like domain; it reads DAVLECKICWQRYDPAEGDPVWQIPPGTPFAALPAHWRCPRCDGDREQFMVVDG. Residues Cys-24, Cys-27, Cys-57, and Cys-60 each contribute to the Fe cation site.

This sequence belongs to the rubredoxin family. Fe(3+) is required as a cofactor.

Rubredoxin is a small nonheme, iron protein lacking acid-labile sulfide. Its single Fe, chelated to 4 Cys, functions as an electron acceptor and may also stabilize the conformation of the molecule. Could be involved in hydrogenase-linked redox processes. The sequence is that of Rubredoxin (hoxR) from Azotobacter vinelandii.